Here is a 443-residue protein sequence, read N- to C-terminus: Putative phosphoribosyl transferase MT0597 (443 aa).

The protein in the N-terminal section; belongs to the purine/pyrimidine phosphoribosyltransferase family. It in the C-terminal section; belongs to the dienelactone hydrolase family.

The protein is Putative phosphoribosyl transferase MT0597 of Mycobacterium tuberculosis (strain CDC 1551 / Oshkosh).